A 396-amino-acid chain; its full sequence is Gamma-D-glutamyl-L-diamino acid endopeptidase 1 (396 aa).

LysM domains follow at residues Met-1–Ile-45 and Thr-51–Val-95. Positions Gln-108–Leu-394 constitute a Peptidase M14 domain. 2 residues coordinate Zn(2+): His-162 and Glu-165. Asp-255 contributes to the substrate binding site. His-307 contributes to the Zn(2+) binding site. The active-site Proton donor is Tyr-347. The active-site Proton donor/acceptor is the Glu-366.

The protein belongs to the peptidase M14 family. Zn(2+) is required as a cofactor.

It catalyses the reaction Hydrolysis of gamma-D-glutamyl bonds to the L-terminus (position 7) of meso-diaminopimelic acid (meso-A2pm) in 7-(L-Ala-gamma-D-Glu)-meso-A2pm and 7-(L-Ala-gamma-D-Glu)-7-(D-Ala)-meso-A2pm. It is required that the D-terminal amino and carboxy groups of meso-A2pm are unsubstituted.. An endopeptidase which hydrolyzes the gamma-D-Glu-(L)meso-diaminopimelic acid bond of L-Ala-gamma-D-Glu-(L)meso-diaminopimelic acid and L-Ala-gamma-D-Glu-(L)meso-diaminopimelic acid(L)-D-Ala peptides. It is active on spore cortex peptidoglycan. The chain is Gamma-D-glutamyl-L-diamino acid endopeptidase 1 from Lysinibacillus sphaericus (Bacillus sphaericus).